Consider the following 740-residue polypeptide: Ion-translocating oxidoreductase complex subunit C (740 aa).

2 consecutive 4Fe-4S ferredoxin-type domains span residues 369-397 (GEPQ…QQLY) and 407-436 (KATT…VQYF). The [4Fe-4S] cluster site is built by Cys-377, Cys-380, Cys-383, Cys-387, Cys-416, Cys-419, Cys-422, and Cys-426. The disordered stretch occupies residues 602–684 (KLEQQQANAE…EPEEQVDPRK (83 aa)). Low complexity-rich tracts occupy residues 605–615 (QQQANAEPEQQ) and 637–647 (QQQANAEPEQQ).

This sequence belongs to the 4Fe4S bacterial-type ferredoxin family. RnfC subfamily. In terms of assembly, the complex is composed of six subunits: RsxA, RsxB, RsxC, RsxD, RsxE and RsxG. Requires [4Fe-4S] cluster as cofactor.

The protein resides in the cell inner membrane. In terms of biological role, part of a membrane-bound complex that couples electron transfer with translocation of ions across the membrane. Required to maintain the reduced state of SoxR. This Escherichia coli O7:K1 (strain IAI39 / ExPEC) protein is Ion-translocating oxidoreductase complex subunit C.